We begin with the raw amino-acid sequence, 203 residues long: Recombination protein RecR (203 aa).

A C4-type zinc finger spans residues 56–71 (CAVCGNVSDNERCRIC). Residues 79 to 179 (SVVCIVEEPK…TVTRIASGLP (101 aa)) form the Toprim domain.

This sequence belongs to the RecR family.

Functionally, may play a role in DNA repair. It seems to be involved in an RecBC-independent recombinational process of DNA repair. It may act with RecF and RecO. In Mycobacterium bovis (strain ATCC BAA-935 / AF2122/97), this protein is Recombination protein RecR.